Consider the following 297-residue polypeptide: B-lymphocyte antigen CD20 (297 aa).

Topologically, residues M1–T51 are cytoplasmic. S36 carries the phosphoserine modification. Residues L52–I72 traverse the membrane as a helical segment. The Extracellular segment spans residues H73–D75. Residues V76–I96 form a helical membrane-spanning segment. Over S97–L122 the chain is Cytoplasmic. The chain crosses the membrane as a helical span at residues S123–I143. Topologically, residues S144–S188 are extracellular. The chain crosses the membrane as a helical span at residues V189–A209. At G210–P297 the chain is on the cytoplasmic side. The S-palmitoyl cysteine moiety is linked to residue C220. S225 carries the phosphoserine modification. The interval E274–P297 is disordered. Positions E281–P290 are enriched in low complexity.

Belongs to the MS4A family. Forms homotetramers. Interacts with the heavy and light chains of cell surface IgM, the antigen-binding components of the BCR. Post-translationally, phosphorylated. Might be functionally regulated by protein kinase(s). As to expression, expressed in PBMCs and lymph node from healthy dogs, in B-cells of canine lymphoma, but not in T-cell lymphoma cells and non-T and non-B-cell lymphoma cells.

It localises to the cell membrane. In terms of biological role, B-lymphocyte-specific membrane protein that plays a role in the regulation of cellular calcium influx necessary for the development, differentiation, and activation of B-lymphocytes. Functions as a store-operated calcium (SOC) channel component promoting calcium influx after activation by the B-cell receptor/BCR. The chain is B-lymphocyte antigen CD20 (MS4A1) from Canis lupus familiaris (Dog).